Reading from the N-terminus, the 422-residue chain is Glutamate-1-semialdehyde 2,1-aminomutase (422 aa).

Residue Lys258 is modified to N6-(pyridoxal phosphate)lysine.

This sequence belongs to the class-III pyridoxal-phosphate-dependent aminotransferase family. HemL subfamily. Homodimer. The cofactor is pyridoxal 5'-phosphate.

Its subcellular location is the cytoplasm. The catalysed reaction is (S)-4-amino-5-oxopentanoate = 5-aminolevulinate. The protein operates within porphyrin-containing compound metabolism; protoporphyrin-IX biosynthesis; 5-aminolevulinate from L-glutamyl-tRNA(Glu): step 2/2. This is Glutamate-1-semialdehyde 2,1-aminomutase from Chlamydia muridarum (strain MoPn / Nigg).